Reading from the N-terminus, the 913-residue chain is Proline and serine-rich protein 1 (913 aa).

At Met1 the chain carries N-acetylmethionine. Disordered stretches follow at residues 233–291 (VPPP…PAVS), 488–507 (ASLSSLPNRNSDSPASATNK), 592–618 (SEPTSPPPSAFKGPAHPGTPVRGTLGL), and 888–913 (DGFPSYPSTPGTPFSLQTGLSQSGWQ). Residues 251–275 (LSSQSKPTQSQTFSTPASQLFSPHG) are compositionally biased toward polar residues. Residues 276-291 (SSNPSTPAATPVPAVS) show a composition bias toward low complexity. Residues 488–506 (ASLSSLPNRNSDSPASATN) are compositionally biased toward polar residues. Residues 893-913 (YPSTPGTPFSLQTGLSQSGWQ) are compositionally biased toward polar residues.

As to quaternary structure, interacts with TET2 and OGT; this interaction mediates TET2 O-GlcNAcylation and stability by promoting the interaction between OGT and TET2. Interacts with KDM6A. Interacts with TET1. Glycosylated. Interaction with OGT leads to GlcNAcylation.

Its function is as follows. Mediates OGT interaction with and O-GlcNAcylation of TET2 to control TET2 stabilization at enhancers and CpG islands (CGIs). The chain is Proline and serine-rich protein 1 from Mus musculus (Mouse).